The primary structure comprises 130 residues: MAQVEYRGTGRRKNSVARVRLVPGEGNITVNGRDVRSYLPFESLILDINQAFDVTETKGNYDVLVNVQGGGFTGQAQAIRHGISRALLEADPEYRGSLKRAGLLTRDPRMKERKKPGLKKARRSPQFSKR.

The disordered stretch occupies residues 98-130 (LKRAGLLTRDPRMKERKKPGLKKARRSPQFSKR). Basic residues predominate over residues 111–130 (KERKKPGLKKARRSPQFSKR).

The protein belongs to the universal ribosomal protein uS9 family.

The polypeptide is Small ribosomal subunit protein uS9 (Staphylococcus saprophyticus subsp. saprophyticus (strain ATCC 15305 / DSM 20229 / NCIMB 8711 / NCTC 7292 / S-41)).